Consider the following 1371-residue polypeptide: Trifunctional purine biosynthetic protein adenosine-3 (1371 aa).

Residues 115 to 321 (KDFMIRHHIP…LYDLMMASCT (207 aa)) form the ATP-grasp domain. ATP is bound by residues 193 to 196 (EEKL), E200, R223, and N232. E291 and N293 together coordinate Mg(2+). The segment at 434-1171 (IHSLTYKESG…ERLLSIPKKR (738 aa)) is AIRS domain. Residues 1169 to 1369 (KKRVGVLISG…VRLNDKCETE (201 aa)) are GART domain. 1180 to 1182 (GSN) provides a ligand contact to N(1)-(5-phospho-beta-D-ribosyl)glycinamide. (6R)-10-formyltetrahydrofolate contacts are provided by residues R1235, 1260-1263 (MRIL), and N1277. The Proton donor role is filled by H1279. A (6R)-10-formyltetrahydrofolate-binding site is contributed by 1311-1315 (DENVD). Position 1341–1344 (1341–1344 (HVAE)) interacts with N(1)-(5-phospho-beta-D-ribosyl)glycinamide.

In the N-terminal section; belongs to the GARS family. This sequence in the central section; belongs to the AIR synthase family. It in the C-terminal section; belongs to the GART family. As to quaternary structure, homodimer. The cofactor is Mg(2+). Mn(2+) serves as cofactor.

It carries out the reaction 5-phospho-beta-D-ribosylamine + glycine + ATP = N(1)-(5-phospho-beta-D-ribosyl)glycinamide + ADP + phosphate + H(+). It catalyses the reaction 2-formamido-N(1)-(5-O-phospho-beta-D-ribosyl)acetamidine + ATP = 5-amino-1-(5-phospho-beta-D-ribosyl)imidazole + ADP + phosphate + H(+). The enzyme catalyses N(1)-(5-phospho-beta-D-ribosyl)glycinamide + (6R)-10-formyltetrahydrofolate = N(2)-formyl-N(1)-(5-phospho-beta-D-ribosyl)glycinamide + (6S)-5,6,7,8-tetrahydrofolate + H(+). It participates in purine metabolism; IMP biosynthesis via de novo pathway; 5-amino-1-(5-phospho-D-ribosyl)imidazole from N(2)-formyl-N(1)-(5-phospho-D-ribosyl)glycinamide: step 2/2. The protein operates within purine metabolism; IMP biosynthesis via de novo pathway; N(1)-(5-phospho-D-ribosyl)glycinamide from 5-phospho-alpha-D-ribose 1-diphosphate: step 2/2. It functions in the pathway purine metabolism; IMP biosynthesis via de novo pathway; N(2)-formyl-N(1)-(5-phospho-D-ribosyl)glycinamide from N(1)-(5-phospho-D-ribosyl)glycinamide (10-formyl THF route): step 1/1. Its function is as follows. Trifunctional enzyme that catalyzes three distinct reactions as part of the 'de novo' inosine monophosphate biosynthetic pathway. This chain is Trifunctional purine biosynthetic protein adenosine-3 (GART), found in Chironomus tentans (Midge).